Here is a 201-residue protein sequence, read N- to C-terminus: Small ribosomal subunit protein uS4 (201 aa).

Positions 1-46 (MARYTGPRSRISRRFGEPVMGDSKALQKKNYAPGMHGRNKKRKQSE) are disordered. The S4 RNA-binding domain occupies 92 to 151 (ARLDNTVYRLGIASSRRAARQLVIHKHIVVNGDVVNIPSYQLKPGDQLGVREKSKSIEAI).

Belongs to the universal ribosomal protein uS4 family. As to quaternary structure, part of the 30S ribosomal subunit. Contacts protein S5. The interaction surface between S4 and S5 is involved in control of translational fidelity.

Its function is as follows. One of the primary rRNA binding proteins, it binds directly to 16S rRNA where it nucleates assembly of the body of the 30S subunit. With S5 and S12 plays an important role in translational accuracy. This Cytophaga hutchinsonii (strain ATCC 33406 / DSM 1761 / CIP 103989 / NBRC 15051 / NCIMB 9469 / D465) protein is Small ribosomal subunit protein uS4.